The primary structure comprises 201 residues: Glutathione peroxidase 1 (201 aa).

Ser32 bears the Phosphoserine mark. Residue Sec47 is part of the active site. Sec47 is a non-standard amino acid (selenocysteine). An N6-acetyllysine; alternate mark is found at Lys86, Lys112, and Lys146. 3 positions are modified to N6-succinyllysine; alternate: Lys86, Lys112, and Lys146. Phosphoserine is present on residues Ser195 and Ser199.

Belongs to the glutathione peroxidase family. Homotetramer. Interacts with MIEN1. During periods of oxidative stress, Sec-47 may react with a superoxide radical, irreversibly lose hydroselenide and be converted to dehydroalanine.

It localises to the cytoplasm. Its subcellular location is the mitochondrion. The catalysed reaction is 2 glutathione + H2O2 = glutathione disulfide + 2 H2O. The enzyme catalyses a hydroperoxy polyunsaturated fatty acid + 2 glutathione = a hydroxy polyunsaturated fatty acid + glutathione disulfide + H2O. It catalyses the reaction tert-butyl hydroperoxide + 2 glutathione = tert-butanol + glutathione disulfide + H2O. It carries out the reaction cumene hydroperoxide + 2 glutathione = 2-phenylpropan-2-ol + glutathione disulfide + H2O. The catalysed reaction is (13S)-hydroperoxy-(9Z,11E)-octadecadienoate + 2 glutathione = (13S)-hydroxy-(9Z,11E)-octadecadienoate + glutathione disulfide + H2O. The enzyme catalyses (9S)-hydroperoxy-(10E,12Z)-octadecadienoate + 2 glutathione = (9S)-hydroxy-(10E,12Z)-octadecadienoate + glutathione disulfide + H2O. It catalyses the reaction (5S)-hydroperoxy-(6E,8Z,11Z,14Z)-eicosatetraenoate + 2 glutathione = (5S)-hydroxy-(6E,8Z,11Z,14Z)-eicosatetraenoate + glutathione disulfide + H2O. It carries out the reaction (12S)-hydroperoxy-(5Z,8Z,10E,14Z)-eicosatetraenoate + 2 glutathione = (12S)-hydroxy-(5Z,8Z,10E,14Z)-eicosatetraenoate + glutathione disulfide + H2O. The catalysed reaction is (12R)-hydroperoxy-(5Z,8Z,10E,14Z)-eicosatetraenoate + 2 glutathione = (12R)-hydroxy-(5Z,8Z,10E,14Z)-eicosatetraenoate + glutathione disulfide + H2O. The enzyme catalyses (15S)-hydroperoxy-(5Z,8Z,11Z,13E)-eicosatetraenoate + 2 glutathione = (15S)-hydroxy-(5Z,8Z,11Z,13E)-eicosatetraenoate + glutathione disulfide + H2O. It catalyses the reaction (5S)-hydroperoxy-(6E,8Z,11Z,14Z,17Z)-eicosapentaenoate + 2 glutathione = (5S)-hydroxy-(6E,8Z,11Z,14Z,17Z)-eicosapentaenoate + glutathione disulfide + H2O. It carries out the reaction (12S)-hydroperoxy-(5Z,8Z,10E,14Z,17Z)-eicosapentaenoate + 2 glutathione = (12S)-hydroxy-(5Z,8Z,10E,14Z,17Z)-eicosapentaenoate + glutathione disulfide + H2O. The catalysed reaction is (15S)-hydroperoxy-(5Z,8Z,11Z,13E,17Z)-eicosapentaenoate + 2 glutathione = (15S)-hydroxy-(5Z,8Z,11Z,13E,17Z)-eicosapentaenoate + glutathione disulfide + H2O. The enzyme catalyses (15S)-hydroperoxy-(11Z,13E)-eicosadienoate + 2 glutathione = (15S)-hydroxy-(11Z,13E)-eicosadienoate + glutathione disulfide + H2O. It catalyses the reaction (17S)-hydroperoxy-(4Z,7Z,10Z,13Z,15E,19Z)-docosahexaenoate + 2 glutathione = (17S)-hydroxy-(4Z,7Z,10Z,13Z,15E,19Z)-docosahexaenoate + glutathione disulfide + H2O. In terms of biological role, catalyzes the reduction of hydroperoxides in a glutathione-dependent manner thus regulating cellular redox homeostasis. Can reduce small soluble hydroperoxides such as H2O2, cumene hydroperoxide and tert-butyl hydroperoxide, as well as several fatty acid-derived hydroperoxides. In platelets catalyzes the reduction of 12-hydroperoxyeicosatetraenoic acid, the primary product of the arachidonate 12-lipoxygenase pathway. The sequence is that of Glutathione peroxidase 1 (GPX1) from Pongo pygmaeus (Bornean orangutan).